We begin with the raw amino-acid sequence, 540 residues long: E3 ubiquitin-protein ligase rnf8-A (540 aa).

Residues 30–84 (VTLGRGLGVTYQLKPTLCPLMISRTHCLFKQNTGGEWTVTDNKSLNGVWRNKERL) form the FHA domain. The segment at 128–205 (LIRPLPDKTK…SGTESRLNDS (78 aa)) is disordered. 2 stretches are compositionally biased toward polar residues: residues 152–162 (ASGNEGPSNFS) and 179–200 (SSHTTDLYKQPTVEPTASGTES). Residues 382–420 (CIICSEHFIEAVTLNCAHSFCSYCIKSWKKRKEECPICR) form an RING-type zinc finger. The interval 517–540 (GTDELDSSDFESDDDEEEDSFLII) is disordered. A compositionally biased stretch (acidic residues) spans 519 to 540 (DELDSSDFESDDDEEEDSFLII).

Belongs to the RNF8 family. Homodimer. Forms a E2-E3 ubiquitin ligase complex composed of the rnf8 homodimer and a E2 heterodimer of ube2n and ube2v2.

The protein resides in the nucleus. It carries out the reaction S-ubiquitinyl-[E2 ubiquitin-conjugating enzyme]-L-cysteine + [acceptor protein]-L-lysine = [E2 ubiquitin-conjugating enzyme]-L-cysteine + N(6)-ubiquitinyl-[acceptor protein]-L-lysine.. Its pathway is protein modification; protein ubiquitination. Functionally, E3 ubiquitin-protein ligase that plays a key role in DNA damage signaling via 2 distinct roles: by mediating the 'Lys-63'-linked ubiquitination of histones H2A and H2AX and promoting the recruitment of DNA repair proteins at double-strand breaks (DSBs) sites, and by catalyzing 'Lys-48'-linked ubiquitination to remove target proteins from DNA damage sites. Following DNA DSBs, it is recruited to the sites of damage by ATM-phosphorylated mdc1 and catalyzes the 'Lys-63'-linked ubiquitination of histones H2A and H2AX, thereby promoting the formation of tp53bp1 and brca1 ionizing radiation-induced foci (IRIF). H2A ubiquitination also mediates the ATM-dependent transcriptional silencing at regions flanking DSBs in cis, a mechanism to avoid collision between transcription and repair intermediates. Also catalyzes the formation of 'Lys-48'-linked polyubiquitin chains, leading to degradation of substrate proteins. In addition to its function in damage signaling, also plays a role in higher-order chromatin structure by mediating extensive chromatin decondensation. The sequence is that of E3 ubiquitin-protein ligase rnf8-A from Xenopus laevis (African clawed frog).